Reading from the N-terminus, the 468-residue chain is MLSKKMKICRPSLVLIYLWYLVDCTSFSMNSVTCLRLMQLLLAKYYQIPIDLVGEKLSIVSASSCLLQYLVALVVVPFYSTIIKKLTPWFTVFTTWVGEEYFFFASTLSILYMDDFPTCAYFVIFSISFLLGISGTGPSLNASYKSLCKLYSYENSFIVVLNSIFVVSSCIGPFLGSILLLRVSLLQLYLISWTIHFINFVFHSLLAVFFSSKYTSYAQKEGQPILNATENLEVEYNALNTTPSSFEEQPLLNGLNDSPRNPVSRTNAEGFKALNASFDGSYKFPIPIVLLCFFLYSLLTPFFDIHLQFQLIVMHMSIVQVGFINSVKTFGSLLTCSVCLFLTYVGGFSVHMMKTTMLIGLTATTLIIFILYFATAQTLPCLALFYGITSSIGPSIHGLVAAYVPNDKPHRYWKFTALLEASATFISYPFQSLAFIVCLKYCSFYFFIGPICICLLGSISSYLLLGYH.

A run of 12 helical transmembrane segments spans residues 13 to 33 (LVLI…NSVT), 59 to 79 (IVSA…VPFY), 92 to 112 (VFTT…SILY), 116 to 136 (FPTC…ISGT), 158 to 178 (IVVL…LGSI), 190 to 210 (LISW…AVFF), 285 to 305 (PIPI…FFDI), 330 to 350 (FGSL…GFSV), 356 to 376 (TMLI…FATA), 382 to 402 (LALF…LVAA), 417 to 437 (ALLE…AFIV), and 446 to 466 (FFIG…LLLG).

The protein resides in the membrane. In terms of biological role, has a role in meiosis. In Schizosaccharomyces pombe (strain 972 / ATCC 24843) (Fission yeast), this protein is Meiotically up-regulated gene 111 protein (mug111).